The sequence spans 396 residues: Putative amidohydrolase YhaA (396 aa).

The active site involves Asp-85. Glu-143 (proton acceptor) is an active-site residue. Positions 144, 182, and 368 each coordinate Zn(2+).

This sequence belongs to the peptidase M20A family. Requires Zn(2+) as cofactor. It depends on Co(2+) as a cofactor.

The chain is Putative amidohydrolase YhaA (yhaA) from Bacillus subtilis (strain 168).